The following is a 321-amino-acid chain: Malate dehydrogenase (321 aa).

Residues 10–15 (GAGQIG) and Asp-34 each bind NAD(+). Substrate is bound by residues Arg-83 and Arg-89. NAD(+) contacts are provided by residues Asn-96 and 119–121 (VTN). Residues Asn-121 and Arg-152 each coordinate substrate. His-176 acts as the Proton acceptor in catalysis.

This sequence belongs to the LDH/MDH superfamily. MDH type 3 family.

The catalysed reaction is (S)-malate + NAD(+) = oxaloacetate + NADH + H(+). Catalyzes the reversible oxidation of malate to oxaloacetate. The chain is Malate dehydrogenase from Azorhizobium caulinodans (strain ATCC 43989 / DSM 5975 / JCM 20966 / LMG 6465 / NBRC 14845 / NCIMB 13405 / ORS 571).